Consider the following 166-residue polypeptide: Large ribosomal subunit protein uL10 (166 aa).

This sequence belongs to the universal ribosomal protein uL10 family. Part of the ribosomal stalk of the 50S ribosomal subunit. The N-terminus interacts with L11 and the large rRNA to form the base of the stalk. The C-terminus forms an elongated spine to which L12 dimers bind in a sequential fashion forming a multimeric L10(L12)X complex.

Forms part of the ribosomal stalk, playing a central role in the interaction of the ribosome with GTP-bound translation factors. This Oceanobacillus iheyensis (strain DSM 14371 / CIP 107618 / JCM 11309 / KCTC 3954 / HTE831) protein is Large ribosomal subunit protein uL10.